Consider the following 252-residue polypeptide: MNSRPAEKIDNNDGQTETPRSKTVSTINSTDALAMVEHSSELTLSITTPVGTKFVCRTPFIGTHTDKFLLVEMPKISADDLQYFFQEGFWMNIRAISPRGEGALIHFRSQLMHILQEPVPMAFLSIPNTMQVSQLRKEPRFELNLAGKVLFDEHRGDCELRDLSRSGCRFITPPLGKTYQVGDLVALEIFSDLRGTKTFPPLTGKICNLQRSLHHARYGLEFNEEGRNNAKNLLAQLKFNGTKLTLNAEKKA.

Over residues 1–11 the composition is skewed to basic and acidic residues; the sequence is MNSRPAEKIDN. A disordered region spans residues 1 to 24; it reads MNSRPAEKIDNNDGQTETPRSKTV. The span at 12–24 shows a compositional bias: polar residues; it reads NDGQTETPRSKTV. The PilZ domain occupies 134–233; that stretch reads QLRKEPRFEL…EEGRNNAKNL (100 aa).

It belongs to the YcgR family. As to quaternary structure, dimer.

The protein localises to the bacterial flagellum basal body. Functionally, may act as a flagellar brake, regulating swimming and swarming in a bis-(3'-5') cyclic diguanylic acid (c-di-GMP)-dependent manner. Increasing levels of c-di-GMP lead to decreased motility (Potential). Binds bis-(3'-5') cyclic diguanylic acid (c-di-GMP) with a dissociation constant of 170 nM in the presence of 10 mM KCl and with 100 nM in its absence. Binds 1 to 2 c-di-GMP per subunit. Only 1 c-di-GMP is seen in the wild-type crystal, while 2 are seen in the mutant. Depending on the concentration of K(+) stoichiometries of 1:1, 1.43:1 and 2:1 are determined by isothermal titration calorimetry. This Vibrio cholerae serotype O1 (strain ATCC 39315 / El Tor Inaba N16961) protein is Cyclic di-GMP binding protein VCA0042.